Consider the following 38-residue polypeptide: Cytochrome b6-f complex subunit 5 (38 aa).

A helical membrane pass occupies residues leucine 5 to alanine 25.

This sequence belongs to the PetG family. The 4 large subunits of the cytochrome b6-f complex are cytochrome b6, subunit IV (17 kDa polypeptide, PetD), cytochrome f and the Rieske protein, while the 4 small subunits are PetG, PetL, PetM and PetN. The complex functions as a dimer.

It localises to the cellular thylakoid membrane. Functionally, component of the cytochrome b6-f complex, which mediates electron transfer between photosystem II (PSII) and photosystem I (PSI), cyclic electron flow around PSI, and state transitions. PetG is required for either the stability or assembly of the cytochrome b6-f complex. The chain is Cytochrome b6-f complex subunit 5 from Crocosphaera subtropica (strain ATCC 51142 / BH68) (Cyanothece sp. (strain ATCC 51142)).